Here is a 449-residue protein sequence, read N- to C-terminus: Doublesex- and mab-3-related transcription factor A2 (449 aa).

The segment at residues C57 to R104 is a DNA-binding region (DM). The tract at residues K166–H259 is disordered. Residues N167–P177 show a composition bias toward polar residues. Positions G230 to G240 are enriched in low complexity. The region spanning M260–Q295 is the DMA domain.

The protein belongs to the DMRT family.

The protein localises to the nucleus. Its function is as follows. May be involved in sexual development. The sequence is that of Doublesex- and mab-3-related transcription factor A2 (dmrta2) from Oreochromis niloticus (Nile tilapia).